A 336-amino-acid chain; its full sequence is Ultraviolet-sensitive opsin (336 aa).

Over 1-29 (MDAWTYQFGNLSKISPFEGPQYHLAPKWA) the chain is Extracellular. N10 carries N-linked (GlcNAc...) asparagine glycosylation. The helical transmembrane segment at 30–54 (FYLQAAFMGFVFFVGTPLNAIVLFV) threads the bilayer. At 55–66 (TMKYKKLRQPLN) the chain is on the cytoplasmic side. Residues 67–91 (YILVNISLGGFIFDTFSVSQVFFSA) traverse the membrane as a helical segment. Topologically, residues 92–106 (LRGYYFFGYTLCAME) are extracellular. C103 and C180 are disulfide-bonded. The chain crosses the membrane as a helical span at residues 107–126 (AAMGSIAGLVTGWSLAVLAF). At 127-145 (ERYVVICKPFGSFKFGQSQ) the chain is on the cytoplasmic side. The helical transmembrane segment at 146–169 (ALGAVALTWIIGIGCATPPFWGWS) threads the bilayer. Residues 170-195 (RYIPEGIGTACGPDWYTKNEEYNTES) are Extracellular-facing. Residues 196–223 (YTYFLLVSCFMMPIMIITFSYSQLLGAL) form a helical membrane-spanning segment. Residues 224–245 (RAVAAQQAESASTQKAEKEVSR) are Cytoplasmic-facing. A helical transmembrane segment spans residues 246 to 269 (MVVVMVGSFVVCYGPYAITALYFS). Residues 270 to 277 (YAEDSNKD) are Extracellular-facing. The chain crosses the membrane as a helical span at residues 278 to 302 (YRLVAIPSLFSKSSCVYNPLIYAFM). K289 carries the post-translational modification N6-(retinylidene)lysine. Topologically, residues 303-336 (NKQFNACIMETVFGKKIDESSEVSSKTETSSVSA) are cytoplasmic.

Belongs to the G-protein coupled receptor 1 family. Opsin subfamily. In terms of processing, phosphorylated on some or all of the serine and threonine residues present in the C-terminal region.

It localises to the membrane. Visual pigments are the light-absorbing molecules that mediate vision. They consist of an apoprotein, opsin, covalently linked to cis-retinal. The polypeptide is Ultraviolet-sensitive opsin (Carassius auratus (Goldfish)).